The sequence spans 100 residues: uncharacterized protein (100 aa).

This is an uncharacterized protein from Haemophilus influenzae (strain ATCC 51907 / DSM 11121 / KW20 / Rd).